The following is a 462-amino-acid chain: Microspherule protein 1 (462 aa).

At M1 the chain carries N-acetylmethionine. The segment at 1–130 is disordered; the sequence is MDKDSQGLLD…KSKQPLQVTK (130 aa). The residue at position 22 (S22) is a Phosphoserine. Positions 43-55 are enriched in basic residues; that stretch reads PKRRSSSRFIKRK. S102 is subject to Phosphoserine. Position 103 is a phosphothreonine (T103). Over residues 103–112 the composition is skewed to pro residues; sequence TPVPPSPAPA. A Phosphoserine modification is found at S108. The short motif at 113–123 is the Nuclear localization signal element; sequence PGLTKRVKKSK. K123 and K130 each carry N6-acetyllysine. The residue at position 282 (S282) is a Phosphoserine. Positions 301–335 form a coiled coil; that stretch reads LEHELMVADRRQKREIRQLEQELHKWQVLVDSITG. Residues 363–419 enclose the FHA domain; the sequence is ITLGRATKDNQIDVDLSLEGPAWKISRKQGVIKLKNNGDFFIANEGRRPIYIDGRPV. Residues 389–396 carry the UBR5-degron motif; the sequence is RKQGVIKL.

In terms of assembly, component of the chromatin remodeling INO80 complex; specifically part of a complex module associated with the N-terminus of INO80. Component of some MLL1/MLL complex, at least composed of the core components KMT2A/MLL1, ASH2L, HCFC1, WDR5 and RBBP5, as well as the facultative components BACC1, CHD8, E2F6, HSP70, INO80C, KANSL1, LAS1L, MAX, MCRS1, MGA, KAT8/MOF, PELP1, PHF20, PRP31, RING2, RUVB1/TIP49A, RUVB2/TIP49B, SENP3, TAF1, TAF4, TAF6, TAF7, TAF9 and TEX10. Component of the NSL complex at least composed of MOF/KAT8, KANSL1, KANSL2, KANSL3, MCRS1, PHF20, OGT1/OGT, WDR5 and HCFC1. Interacts with NOP2. Interacts with PINX1. Interacts with TERT. Interacts with CCDC85B. Interacts with DAXX. Interacts (via N-terminus) with FMR1 (via phosphorylated form). Interacts with FXR1 and FXR2. Interacts (via C-terminus) with NDE1 (via C-terminus); phosphorylation of NDE1 inhibits the interaction. Interacts (via C-terminus) with ZNF375. Interacts (via C-terminus) with active GTP-bound RHEB (via N-terminus) under conditions of high amino acid concentration; the interaction promotes mTORC1 complex activation by RHEB. Interacts (via N-terminus) with the mTORC1 complex; the interaction ensures mTORC1 activation by RHEB. Interacts with DYNC1I1; the interaction is required for the proper distribution of centriolar satellites. Interacts with TTBK2; the interaction is required for recruitment of TTBK2 to the mother centriole. Interacts with KIF2A; the interaction occurs during mitosis and facilitates chromosome alignment. (Microbial infection) Interacts with Herpes simplex virus ICP22. In terms of processing, ubiquitinated by UBR5 when not assembled in the INO80 complex, leading to its degradation: UBR5 recognizes and binds a degron that is not accessible when MCRS1 is part of the INO80 complex. Post-translationally, phosphorylated by AURKA on Ser-35 and/or Ser-36 during mitosis which is required for kinetochore fiber assembly and mitotic progression but not for spindle localization or for chromosome-induced microtuble aster formation. Also phosphorylated by AURKA on Ser-85 and/or Ser-87. Phosphorylated by TTK/MPS1 which enhances recruitment of KIF2A to the minus end of spindle microtubules and facilitates precise chromosome segregation. Detected in testis, and at lower levels in spleen, thymus, prostate, uterus, small intestine, colon and leukocytes.

The protein localises to the nucleus. The protein resides in the nucleolus. It localises to the cytoplasm. Its subcellular location is the cytoskeleton. It is found in the microtubule organizing center. The protein localises to the centrosome. The protein resides in the spindle pole. It localises to the chromosome. Its subcellular location is the centromere. It is found in the kinetochore. The protein localises to the lysosome. The protein resides in the centriolar satellite. Modulates the transcription repressor activity of DAXX by recruiting it to the nucleolus. As part of the NSL complex, may be involved in acetylation of nucleosomal histone H4 on several lysine residues. Putative regulatory component of the chromatin remodeling INO80 complex which is involved in transcriptional regulation, DNA replication and probably DNA repair. May also be an inhibitor of TERT telomerase activity. Binds to G-quadruplex structures in mRNA. Binds to RNA homomer poly(G) and poly(U). Maintains RHEB at the lysosome in its active GTP-bound form and prevents its interaction with the mTORC1 complex inhibitor TSC2, ensuring activation of the mTORC1 complex by RHEB. Stabilizes the minus ends of kinetochore fibers by protecting them from depolymerization, ensuring functional spindle assembly during mitosis. Following phosphorylation by TTK/MPS1, enhances recruitment of KIF2A to the minus ends of mitotic spindle microtubules which promotes chromosome alignment. Regulates the morphology of microtubule minus ends in mitotic spindle by maintaining them in a closed conformation characterized by the presence of an electron-dense cap. Regulates G2/M transition and spindle assembly during oocyte meiosis. Mediates histone modifications and transcriptional regulation in germinal vesicle oocytes which are required for meiotic progression. Also regulates microtubule nucleation and spindle assembly by activating aurora kinases during oocyte meiosis. Contributes to the establishment of centriolar satellites and also plays a role in primary cilium formation by recruiting TTBK2 to the mother centriole which is necessary for removal of the CP110 cap from the mother centriole, an early step in ciliogenesis. Required for epiblast development during early embryogenesis. Essential for cell viability. This Homo sapiens (Human) protein is Microspherule protein 1 (MCRS1).